We begin with the raw amino-acid sequence, 833 residues long: DNA ligase (833 aa).

NAD(+) contacts are provided by residues D35–D39, S84–L85, and E115. K117 functions as the N6-AMP-lysine intermediate in the catalytic mechanism. Residues R138, E175, K292, and K316 each coordinate NAD(+). 4 residues coordinate Zn(2+): C410, C413, C428, and C434. In terms of domain architecture, BRCT spans V750 to V833.

This sequence belongs to the NAD-dependent DNA ligase family. LigA subfamily. Mg(2+) serves as cofactor. It depends on Mn(2+) as a cofactor.

The catalysed reaction is NAD(+) + (deoxyribonucleotide)n-3'-hydroxyl + 5'-phospho-(deoxyribonucleotide)m = (deoxyribonucleotide)n+m + AMP + beta-nicotinamide D-nucleotide.. Functionally, DNA ligase that catalyzes the formation of phosphodiester linkages between 5'-phosphoryl and 3'-hydroxyl groups in double-stranded DNA using NAD as a coenzyme and as the energy source for the reaction. It is essential for DNA replication and repair of damaged DNA. The chain is DNA ligase from Xanthomonas campestris pv. campestris (strain 8004).